A 515-amino-acid chain; its full sequence is Histidine ammonia-lyase (515 aa).

The segment at residues 142-144 is a cross-link (5-imidazolinone (Ala-Gly)); the sequence is ASG. Residue S143 is modified to 2,3-didehydroalanine (Ser).

This sequence belongs to the PAL/histidase family. In terms of processing, contains an active site 4-methylidene-imidazol-5-one (MIO), which is formed autocatalytically by cyclization and dehydration of residues Ala-Ser-Gly.

Its subcellular location is the cytoplasm. It catalyses the reaction L-histidine = trans-urocanate + NH4(+). It functions in the pathway amino-acid degradation; L-histidine degradation into L-glutamate; N-formimidoyl-L-glutamate from L-histidine: step 1/3. The chain is Histidine ammonia-lyase from Bradyrhizobium sp. (strain ORS 278).